Consider the following 389-residue polypeptide: Succinate--CoA ligase [ADP-forming] subunit beta (389 aa).

The ATP-grasp domain maps to 9 to 244 (KAVLAKYGVP…LTEEDPAEVE (236 aa)). ATP-binding positions include K46, 53–55 (GRG), E99, S102, and E107. Mg(2+)-binding residues include N199 and D213. Residues N264 and 321–323 (GIM) contribute to the substrate site.

It belongs to the succinate/malate CoA ligase beta subunit family. Heterotetramer of two alpha and two beta subunits. Mg(2+) serves as cofactor.

The catalysed reaction is succinate + ATP + CoA = succinyl-CoA + ADP + phosphate. It catalyses the reaction GTP + succinate + CoA = succinyl-CoA + GDP + phosphate. It functions in the pathway carbohydrate metabolism; tricarboxylic acid cycle; succinate from succinyl-CoA (ligase route): step 1/1. Functionally, succinyl-CoA synthetase functions in the citric acid cycle (TCA), coupling the hydrolysis of succinyl-CoA to the synthesis of either ATP or GTP and thus represents the only step of substrate-level phosphorylation in the TCA. The beta subunit provides nucleotide specificity of the enzyme and binds the substrate succinate, while the binding sites for coenzyme A and phosphate are found in the alpha subunit. This Parvibaculum lavamentivorans (strain DS-1 / DSM 13023 / NCIMB 13966) protein is Succinate--CoA ligase [ADP-forming] subunit beta.